The primary structure comprises 325 residues: D site-binding protein (325 aa).

Disordered stretches follow at residues 1–98, 124–203, and 230–256; these read MARP…AGPS, LEHG…EVLM, and FSEE…QKDE. Positions 17 to 28 are enriched in gly residues; that stretch reads GPAGAPPGGGAL. Low complexity predominate over residues 71-80; it reads AGPADAPSGA. Serine 86 carries the phosphoserine modification. Residues 88–98 show a composition bias toward low complexity; it reads RGRSGPVAGPS. The span at 129 to 153 shows a compositional bias: pro residues; sequence PPSPPPPGGLSPAPSPARTPAPSPG. Low complexity predominate over residues 154 to 171; the sequence is PGSCSSSSPRSSPGHAPA. Residues 255–318 form the bZIP domain; the sequence is DEKYWSRRYK…SHYRAVLSRY (64 aa). A basic motif region spans residues 257 to 279; it reads KYWSRRYKNNEAAKRSRDARRLK. The tract at residues 283-297 is leucine-zipper; that stretch reads ISVRAAFLEKENALL.

Belongs to the bZIP family. PAR subfamily. As to quaternary structure, binds DNA as a homodimer or a heterodimer. Can form a heterodimer with TEF. Expressed in the suprachiasmatic nuclei (SCN) and in most peripheral tissues, with a strong circadian rhythmicity.

It is found in the nucleus. Functionally, this transcriptional activator recognizes and binds to the sequence 5'-RTTAYGTAAY-3' found in the promoter of genes such as albumin, CYP2A4 and CYP2A5. It is not essential for circadian rhythm generation, but modulates important clock output genes. May be a direct target for regulation by the circadian pacemaker component clock. May affect circadian period and sleep regulation. The chain is D site-binding protein (Dbp) from Mus musculus (Mouse).